A 118-amino-acid polypeptide reads, in one-letter code: Peptidyl-tRNA hydrolase (118 aa).

The protein belongs to the PTH2 family.

It is found in the cytoplasm. It carries out the reaction an N-acyl-L-alpha-aminoacyl-tRNA + H2O = an N-acyl-L-amino acid + a tRNA + H(+). Its function is as follows. The natural substrate for this enzyme may be peptidyl-tRNAs which drop off the ribosome during protein synthesis. This is Peptidyl-tRNA hydrolase from Thermococcus onnurineus (strain NA1).